Reading from the N-terminus, the 191-residue chain is Protein Ves (191 aa).

This sequence belongs to the Ves family.

The protein is Protein Ves of Escherichia coli (strain K12 / MC4100 / BW2952).